Reading from the N-terminus, the 387-residue chain is Formate-dependent phosphoribosylglycinamide formyltransferase (387 aa).

Residues 12-13 (EL) and Glu72 contribute to the N(1)-(5-phospho-beta-D-ribosyl)glycinamide site. Residues Arg104, Lys145, 150 to 155 (SSGKGQ), 185 to 188 (EEFI), and Glu193 contribute to the ATP site. Residues 109 to 300 (DLAAKDLKLL…EFELHIRAIL (192 aa)) form the ATP-grasp domain. 2 residues coordinate Mg(2+): Glu258 and Glu270. N(1)-(5-phospho-beta-D-ribosyl)glycinamide contacts are provided by residues Asp277, Lys348, and 355–356 (RR).

It belongs to the PurK/PurT family. Homodimer.

It carries out the reaction N(1)-(5-phospho-beta-D-ribosyl)glycinamide + formate + ATP = N(2)-formyl-N(1)-(5-phospho-beta-D-ribosyl)glycinamide + ADP + phosphate + H(+). It functions in the pathway purine metabolism; IMP biosynthesis via de novo pathway; N(2)-formyl-N(1)-(5-phospho-D-ribosyl)glycinamide from N(1)-(5-phospho-D-ribosyl)glycinamide (formate route): step 1/1. Functionally, involved in the de novo purine biosynthesis. Catalyzes the transfer of formate to 5-phospho-ribosyl-glycinamide (GAR), producing 5-phospho-ribosyl-N-formylglycinamide (FGAR). Formate is provided by PurU via hydrolysis of 10-formyl-tetrahydrofolate. This Leptospira borgpetersenii serovar Hardjo-bovis (strain JB197) protein is Formate-dependent phosphoribosylglycinamide formyltransferase.